A 244-amino-acid polypeptide reads, in one-letter code: DNA repair protein RecO (244 aa).

It belongs to the RecO family.

Functionally, involved in DNA repair and RecF pathway recombination. The protein is DNA repair protein RecO of Geobacter metallireducens (strain ATCC 53774 / DSM 7210 / GS-15).